The following is a 425-amino-acid chain: 5-methylthioadenosine/S-adenosylhomocysteine deaminase (425 aa).

Positions 63 and 65 each coordinate Zn(2+). 2 residues coordinate substrate: E92 and H184. Residue H211 participates in Zn(2+) binding. Substrate is bound by residues E214 and D299. D299 contributes to the Zn(2+) binding site.

It belongs to the metallo-dependent hydrolases superfamily. MTA/SAH deaminase family. Zn(2+) is required as a cofactor.

It carries out the reaction S-adenosyl-L-homocysteine + H2O + H(+) = S-inosyl-L-homocysteine + NH4(+). The catalysed reaction is S-methyl-5'-thioadenosine + H2O + H(+) = S-methyl-5'-thioinosine + NH4(+). Functionally, catalyzes the deamination of 5-methylthioadenosine and S-adenosyl-L-homocysteine into 5-methylthioinosine and S-inosyl-L-homocysteine, respectively. Is also able to deaminate adenosine. The protein is 5-methylthioadenosine/S-adenosylhomocysteine deaminase of Pyrococcus abyssi (strain GE5 / Orsay).